Here is a 437-residue protein sequence, read N- to C-terminus: Pyrophosphate--fructose 6-phosphate 1-phosphotransferase (437 aa).

Gly27 contacts diphosphate. Residue Asp122 coordinates Mg(2+). Residues 147–149, 193–195, Glu261, and 323–326 each bind substrate; these read TID, MGR, and YELR. Asp149 serves as the catalytic Proton acceptor.

This sequence belongs to the phosphofructokinase type A (PFKA) family. PPi-dependent PFK group II subfamily. Clade 'Short' sub-subfamily. Homotetramer. Requires Mg(2+) as cofactor. It depends on Mn(2+) as a cofactor.

The protein resides in the cytoplasm. The catalysed reaction is beta-D-fructose 6-phosphate + diphosphate = beta-D-fructose 1,6-bisphosphate + phosphate + H(+). Its pathway is carbohydrate degradation; glycolysis; D-glyceraldehyde 3-phosphate and glycerone phosphate from D-glucose: step 3/4. Its activity is regulated as follows. Activated by AMP. Probably promotes oligomerization of the enzyme. Its function is as follows. Catalyzes the phosphorylation of D-fructose 6-phosphate, the first committing step of glycolysis. Uses inorganic phosphate (PPi) as phosphoryl donor instead of ATP like common ATP-dependent phosphofructokinases (ATP-PFKs), which renders the reaction reversible, and can thus function both in glycolysis and gluconeogenesis. Consistently, PPi-PFK can replace the enzymes of both the forward (ATP-PFK) and reverse (fructose-bisphosphatase (FBPase)) reactions. In Naegleria fowleri (Brain eating amoeba), this protein is Pyrophosphate--fructose 6-phosphate 1-phosphotransferase.